The following is a 155-amino-acid chain: Non-secretory ribonuclease (155 aa).

The signal sequence occupies residues 1–25 (MGPKLLESRLCLLLLLGLVLMLASC). A substrate-binding site is contributed by lysine 33. The Proton acceptor role is filled by histidine 38. Residue asparagine 41 is glycosylated (N-linked (GlcNAc...) asparagine). Intrachain disulfides connect cysteine 47–cysteine 106, cysteine 61–cysteine 118, cysteine 79–cysteine 133, and cysteine 86–cysteine 94. Tyrosine 57 is modified (3'-nitrotyrosine). Position 62–66 (62–66 (KDINT)) interacts with substrate. 3 N-linked (GlcNAc...) asparagine glycosylation sites follow: asparagine 83, asparagine 88, and asparagine 107. The active-site Proton donor is the histidine 150.

The protein belongs to the pancreatic ribonuclease family. Interacts with and forms a tight 1:1 complex with RNH1. Dimerization of two such complexes may occur.

It localises to the lysosome. Its subcellular location is the cytoplasmic granule. It catalyses the reaction an [RNA] containing cytidine + H2O = an [RNA]-3'-cytidine-3'-phosphate + a 5'-hydroxy-ribonucleotide-3'-[RNA].. The catalysed reaction is an [RNA] containing uridine + H2O = an [RNA]-3'-uridine-3'-phosphate + a 5'-hydroxy-ribonucleotide-3'-[RNA].. Its function is as follows. This is a non-secretory ribonuclease. It is a pyrimidine specific nuclease with a slight preference for U. Cytotoxin and helminthotoxin. Possesses a wide variety of biological activities. The polypeptide is Non-secretory ribonuclease (Rnase2) (Mus musculus (Mouse)).